Here is a 338-residue protein sequence, read N- to C-terminus: tRNA-specific 2-thiouridylase MnmA (338 aa).

Residues 6 to 13 (AMSGGVDS) and M32 contribute to the ATP site. The active-site Nucleophile is the C92. C92 and C186 form a disulfide bridge. G116 serves as a coordination point for ATP. Residues 134–136 (KDQ) form an interaction with tRNA region. C186 acts as the Cysteine persulfide intermediate in catalysis. Residues 288–289 (RY) are interaction with tRNA.

The protein belongs to the MnmA/TRMU family.

It is found in the cytoplasm. It carries out the reaction S-sulfanyl-L-cysteinyl-[protein] + uridine(34) in tRNA + AH2 + ATP = 2-thiouridine(34) in tRNA + L-cysteinyl-[protein] + A + AMP + diphosphate + H(+). Functionally, catalyzes the 2-thiolation of uridine at the wobble position (U34) of tRNA, leading to the formation of s(2)U34. In Campylobacter jejuni subsp. jejuni serotype O:2 (strain ATCC 700819 / NCTC 11168), this protein is tRNA-specific 2-thiouridylase MnmA.